Here is a 1165-residue protein sequence, read N- to C-terminus: Leptin receptor (1165 aa).

The first 21 residues, 1–21 (MTCPKFSVALLHWEFIYVITA), serve as a signal peptide directing secretion. Residues 22 to 838 (FDLAYPITPW…TQDGEKHRND (817 aa)) lie on the Extracellular side of the membrane. 5 cysteine pairs are disulfide-bonded: Cys-37–Cys-90, Cys-89–Cys-99, Cys-131–Cys-142, Cys-186–Cys-196, and Cys-188–Cys-193. Residues Asn-41, Asn-55, Asn-72, Asn-80, and Asn-98 are each glycosylated (N-linked (GlcNAc...) asparagine). Asn-187 is a glycosylation site (N-linked (GlcNAc...) asparagine). Asn-206, Asn-276, Asn-347, and Asn-397 each carry an N-linked (GlcNAc...) asparagine glycan. The Fibronectin type-III 1 domain maps to 239-332 (PPLGLHMEIT…STPFTFTTQD (94 aa)). Disulfide bonds link Cys-352–Cys-412 and Cys-413–Cys-418. A glycan (N-linked (GlcNAc...) asparagine) is linked at Asn-433. Intrachain disulfides connect Cys-436-Cys-447, Cys-473-Cys-528, and Cys-488-Cys-498. The interval 467–484 (HRSSLYCSDVPSVHPISE) is leptin-binding. Fibronectin type-III domains follow at residues 539–634 (PPSS…TVVT), 642–736 (GPEF…WPMS), and 740–834 (IVQS…DGEK). Residues 622 to 626 (WSNWS) carry the WSXWS motif motif. N-linked (GlcNAc...) asparagine glycans are attached at residues Asn-624, Asn-659, Asn-670, Asn-697, Asn-728, and Asn-750. The chain crosses the membrane as a helical span at residues 839 to 861 (AGLYVIVPIIISSSILLLGTLLM). Residues 862–1165 (SHQRMKKLFW…MENKMYDLTV (304 aa)) lie on the Cytoplasmic side of the membrane. Positions 870–878 (FWEDVPNPK) match the Box 1 motif motif. The residue at position 881 (Ser-881) is a Phosphoserine. The tract at residues 892–897 (ETFEHL) is required for JAK2 activation. The interval 897 to 905 (LFIKHTESV) is required for STAT3 phosphorylation. Tyr-986 is modified (phosphotyrosine; by JAK2). Tyr-1079 bears the Phosphotyrosine mark. Tyr-1141 is subject to Phosphotyrosine; by JAK2.

The protein belongs to the type I cytokine receptor family. Type 2 subfamily. In terms of assembly, present as a mixture of monomers and dimers. The phosphorylated receptor binds a number of SH2 domain-containing proteins such as JAK2, STAT3, PTPN11, and SOCS3. Interaction with SOCS3 inhibits JAK/STAT signaling and MAPK cascade. On ligand binding, phosphorylated on two conserved C-terminal tyrosine residues by JAK2. Tyr-986 is required for complete binding and activation of PTPN11, ERK/FOS activation,for interaction with SOCS3 and SOCS3 mediated inhibition of leptin signaling. Phosphorylation on Tyr-1141 is required for STAT3 binding/activation. Phosphorylation of Tyr-1079 has a more accessory role. As to expression, kidney, liver, spleen, lung, brain, testis, uterus, ovary, corpus luteum, theca and granulosa cells.

The protein resides in the cell membrane. Its subcellular location is the basolateral cell membrane. Its function is as follows. Receptor for hormone LEP/leptin. On ligand binding, mediates LEP central and peripheral effects through the activation of different signaling pathways such as JAK2/STAT3 and MAPK cascade/FOS. In the hypothalamus, LEP acts as an appetite-regulating factor that induces a decrease in food intake and an increase in energy consumption by inducing anorexinogenic factors and suppressing orexigenic neuropeptides, also regulates bone mass and secretion of hypothalamo-pituitary-adrenal hormones. In the periphery, increases basal metabolism, influences reproductive function, regulates pancreatic beta-cell function and insulin secretion, is pro-angiogenic and affects innate and adaptive immunity. Control of energy homeostasis and melanocortin production (stimulation of POMC and full repression of AgRP transcription) is mediated by STAT3 signaling, whereas distinct signals regulate NPY and the control of fertility, growth and glucose homeostasis. Involved in the regulation of counter-regulatory response to hypoglycemia by inhibiting neurons of the parabrachial nucleus. Has a specific effect on T lymphocyte responses, differentially regulating the proliferation of naive and memory T-cells. Leptin increases Th1 and suppresses Th2 cytokine production. The protein is Leptin receptor (LEPR) of Sus scrofa (Pig).